The primary structure comprises 356 residues: Nicotinate-nucleotide--dimethylbenzimidazole phosphoribosyltransferase (356 aa).

The Proton acceptor role is filled by Glu-317.

This sequence belongs to the CobT family. Homodimer.

It catalyses the reaction 5,6-dimethylbenzimidazole + nicotinate beta-D-ribonucleotide = alpha-ribazole 5'-phosphate + nicotinate + H(+). Its pathway is nucleoside biosynthesis; alpha-ribazole biosynthesis; alpha-ribazole from 5,6-dimethylbenzimidazole: step 1/2. Functionally, catalyzes the synthesis of alpha-ribazole-5'-phosphate from nicotinate mononucleotide (NAMN) and 5,6-dimethylbenzimidazole (DMB). This is Nicotinate-nucleotide--dimethylbenzimidazole phosphoribosyltransferase from Salmonella paratyphi C (strain RKS4594).